Reading from the N-terminus, the 1115-residue chain is Ubiquitin C-terminal hydrolase 13 (1115 aa).

Residues 1–51 (MTMMTPPPLDQQEDEEMLVPNPDLVEGPQPMEVAQTDPAATAVENPPPEDP) are disordered. The MATH domain maps to 53–178 (SLKFTWTIPM…NDTVLIEAEV (126 aa)). The region spanning 198-522 (VGLKNQGATC…NAYMLVYIRE (325 aa)) is the USP domain. The active-site Nucleophile is Cys-207. The Proton acceptor role is filled by His-454.

It belongs to the peptidase C19 family. Interacts with SIC/RON3. Interacts with RGI1 and RGI2.

The catalysed reaction is Thiol-dependent hydrolysis of ester, thioester, amide, peptide and isopeptide bonds formed by the C-terminal Gly of ubiquitin (a 76-residue protein attached to proteins as an intracellular targeting signal).. Functionally, recognizes and hydrolyzes the peptide bond at the C-terminal Gly of ubiquitin. Involved in the processing of poly-ubiquitin precursors as well as that of ubiquitinated proteins. Positive regulator of root meristem development that, together with UBP12, prevents the ubiquitination and turnover of RGFR1 induced by the RGF1 hormone peptide, thus influencing PLT1 and PLT2 expression. The polypeptide is Ubiquitin C-terminal hydrolase 13 (Arabidopsis thaliana (Mouse-ear cress)).